The sequence spans 316 residues: Porphobilinogen deaminase (316 aa).

Cysteine 245 bears the S-(dipyrrolylmethanemethyl)cysteine mark.

It belongs to the HMBS family. Monomer. Dipyrromethane is required as a cofactor.

It carries out the reaction 4 porphobilinogen + H2O = hydroxymethylbilane + 4 NH4(+). The protein operates within porphyrin-containing compound metabolism; protoporphyrin-IX biosynthesis; coproporphyrinogen-III from 5-aminolevulinate: step 2/4. It participates in porphyrin-containing compound metabolism; chlorophyll biosynthesis. Functionally, tetrapolymerization of the monopyrrole PBG into the hydroxymethylbilane pre-uroporphyrinogen in several discrete steps. This chain is Porphobilinogen deaminase, found in Synechococcus sp. (strain CC9311).